Consider the following 340-residue polypeptide: Guanine nucleotide-binding protein G(I)/G(S)/G(T) subunit beta-3 (340 aa).

WD repeat units lie at residues 53 to 83 (GHLA…IVWD), 95 to 125 (LRSS…SIYS), 141 to 170 (AHTG…ALWD), 182 to 212 (GHTG…KLWD), 224 to 254 (GHES…RLFD), 268 to 298 (SIIC…NVWD), and 310 to 340 (GHDN…KIWN).

The protein belongs to the WD repeat G protein beta family. G proteins are composed of 3 units, alpha, beta and gamma. Interacts with RASD2. In terms of tissue distribution, expressed at a high level in the heart and at a much lower level in the brain.

Guanine nucleotide-binding proteins (G proteins) are involved as a modulator or transducer in various transmembrane signaling systems. The beta and gamma chains are required for the GTPase activity, for replacement of GDP by GTP, and for G protein-effector interaction. This chain is Guanine nucleotide-binding protein G(I)/G(S)/G(T) subunit beta-3 (Gnb3), found in Rattus norvegicus (Rat).